The sequence spans 513 residues: 2-isopropylmalate synthase (513 aa).

The region spanning 5–268 is the Pyruvate carboxyltransferase domain; the sequence is LIIFDTTLRD…DVGVDTSQIV (264 aa). Residues Asp-14, His-202, His-204, and Asn-239 each coordinate Mn(2+). Positions 394-513 are regulatory domain; sequence RFISLSQRSE…KAVQKINPQI (120 aa).

Belongs to the alpha-IPM synthase/homocitrate synthase family. LeuA type 1 subfamily. As to quaternary structure, homodimer. Requires Mn(2+) as cofactor.

The protein localises to the cytoplasm. The enzyme catalyses 3-methyl-2-oxobutanoate + acetyl-CoA + H2O = (2S)-2-isopropylmalate + CoA + H(+). The protein operates within amino-acid biosynthesis; L-leucine biosynthesis; L-leucine from 3-methyl-2-oxobutanoate: step 1/4. Catalyzes the condensation of the acetyl group of acetyl-CoA with 3-methyl-2-oxobutanoate (2-ketoisovalerate) to form 3-carboxy-3-hydroxy-4-methylpentanoate (2-isopropylmalate). This chain is 2-isopropylmalate synthase, found in Cupriavidus pinatubonensis (strain JMP 134 / LMG 1197) (Cupriavidus necator (strain JMP 134)).